A 420-amino-acid chain; its full sequence is D-tagatose-1,6-bisphosphate aldolase subunit GatZ (420 aa).

This sequence belongs to the GatZ/KbaZ family. GatZ subfamily. In terms of assembly, forms a complex with GatY.

It participates in carbohydrate metabolism; D-tagatose 6-phosphate degradation; D-glyceraldehyde 3-phosphate and glycerone phosphate from D-tagatose 6-phosphate: step 2/2. Its function is as follows. Component of the tagatose-1,6-bisphosphate aldolase GatYZ that is required for full activity and stability of the Y subunit. Could have a chaperone-like function for the proper and stable folding of GatY. When expressed alone, GatZ does not show any aldolase activity. Is involved in the catabolism of galactitol. This Escherichia coli O139:H28 (strain E24377A / ETEC) protein is D-tagatose-1,6-bisphosphate aldolase subunit GatZ.